Consider the following 1251-residue polypeptide: Phospholipid-transporting ATPase IC (1251 aa).

Residues 1–54 are disordered; it reads MSTERDSETTFDEDSQPNDEVVPYSDDETEDELDDQGSAVEPEQNRVNREAEEN. Over 1–108 the chain is Cytoplasmic; it reads MSTERDSETT…TYKYNAFTFI (108 aa). Over residues 25 to 35 the composition is skewed to acidic residues; that stretch reads SDDETEDELDD. The segment covering 43–54 has biased composition (basic and acidic residues); sequence EQNRVNREAEEN. The helical transmembrane segment at 109-130 threads the bilayer; it reads PMNLFEQFKRAANLYFLALLIL. The Exoplasmic loop segment spans residues 131–136; sequence QAVPQI. Residues 137-156 form a helical membrane-spanning segment; that stretch reads STLAWYTTLVPLLVVLGVTA. Topologically, residues 157 to 340 are cytoplasmic; it reads IKDLVDDVAR…TKIDYLMNYM (184 aa). Residues 341–362 traverse the membrane as a helical segment; sequence VYTIFVVLILLSAGLAIGHAYW. Topologically, residues 363 to 389 are exoplasmic loop; the sequence is EAQVGNSSWYLYDGEDDTPSYRGFLIF. The chain crosses the membrane as a helical span at residues 390–411; it reads WGYIIVLNTMVPISLYVSVEVI. The Cytoplasmic portion of the chain corresponds to 412-949; sequence RLGQSHFINW…GRWSYIRMCK (538 aa). The active-site 4-aspartylphosphate intermediate is D454. Positions 454, 455, 456, 555, 596, 619, 652, 732, 733, 734, 867, and 873 each coordinate ATP. Position 454 (D454) interacts with Mg(2+). Residue T456 participates in Mg(2+) binding. D893 contacts Mg(2+). ATP is bound by residues N896 and D897. D897 contributes to the Mg(2+) binding site. A helical membrane pass occupies residues 950–970; it reads FLRYFFYKNFAFTLVHFWYSF. Residues 971 to 982 lie on the Exoplasmic loop side of the membrane; the sequence is FNGYSAQTAYED. A helical membrane pass occupies residues 983–1002; sequence WFITLYNVLYTSLPVLLMGL. Residues 1003–1032 lie on the Cytoplasmic side of the membrane; that stretch reads LDQDVSDKLSLRFPGLYIVGQRDLLFNYKR. Residues 1033-1054 traverse the membrane as a helical segment; sequence FFVSLLHGVLTSMILFFIPLGA. Residues 1055–1068 lie on the Exoplasmic loop side of the membrane; sequence YLQTVGQDGEAPSD. Residues 1069–1091 form a helical membrane-spanning segment; the sequence is YQSFAVTIASALVITVNFQIGLD. The Cytoplasmic segment spans residues 1092–1097; sequence TSYWTF. Residues 1098–1118 traverse the membrane as a helical segment; the sequence is VNAFSIFGSIALYFGIMFDFH. Residues 1119–1138 lie on the Exoplasmic loop side of the membrane; the sequence is SAGIHVLFPSAFQFTGTASN. A helical membrane pass occupies residues 1139 to 1163; the sequence is ALRQPYIWLTIILAVAVCLLPVVAI. Residues 1164-1251 lie on the Cytoplasmic side of the membrane; the sequence is RFLSMTIWPS…TAEYRRTGDS (88 aa). The residue at position 1223 (S1223) is a Phosphoserine.

It belongs to the cation transport ATPase (P-type) (TC 3.A.3) family. Type IV subfamily. In terms of assembly, component of a P4-ATPase flippase complex which consists of a catalytic alpha subunit ATP8B1 and an accessory beta subunit TMEM30A. The flippase ATP8B1:TMEM30A complex can form an intermediate phosphoenzyme in vitro. Also interacts with beta subunit TMEM30B. Requires Mg(2+) as cofactor. In terms of tissue distribution, found in most tissues except brain and skeletal muscle. Most abundant in pancreas and small intestine.

The protein localises to the cell membrane. Its subcellular location is the apical cell membrane. The protein resides in the cell projection. It is found in the stereocilium. It localises to the endoplasmic reticulum. The protein localises to the golgi apparatus. The enzyme catalyses ATP + H2O + phospholipidSide 1 = ADP + phosphate + phospholipidSide 2.. It carries out the reaction a 1,2-diacyl-sn-glycero-3-phosphocholine(out) + ATP + H2O = a 1,2-diacyl-sn-glycero-3-phosphocholine(in) + ADP + phosphate + H(+). The catalysed reaction is a 1,2-diacyl-sn-glycero-3-phospho-L-serine(out) + ATP + H2O = a 1,2-diacyl-sn-glycero-3-phospho-L-serine(in) + ADP + phosphate + H(+). In terms of biological role, catalytic component of a P4-ATPase flippase complex which catalyzes the hydrolysis of ATP coupled to the transport of phospholipids, in particular phosphatidylcholines (PC), from the outer to the inner leaflet of the plasma membrane. May participate in the establishment of the canalicular membrane integrity by ensuring asymmetric distribution of phospholipids in the canicular membrane. Thus may have a role in the regulation of bile acids transport into the canaliculus, uptake of bile acids from intestinal contents into intestinal mucosa or both and protect hepatocytes from bile salts. Involved in the microvillus formation in polarized epithelial cells; the function seems to be independent from its flippase activity. Participates in correct apical membrane localization of CDC42, CFTR and SLC10A2. Enables CDC42 clustering at the apical membrane during enterocyte polarization through the interaction between CDC42 polybasic region and negatively charged membrane lipids provided by ATP8B1. Together with TMEM30A is involved in uptake of the synthetic drug alkylphospholipid perifosine. Required for the preservation of cochlear hair cells in the inner ear. May act as cardiolipin transporter during inflammatory injury. This is Phospholipid-transporting ATPase IC from Homo sapiens (Human).